A 513-amino-acid chain; its full sequence is ATP synthase subunit alpha (513 aa).

Position 169 to 176 (169 to 176 (GDRQTGKT)) interacts with ATP.

Belongs to the ATPase alpha/beta chains family. In terms of assembly, F-type ATPases have 2 components, CF(1) - the catalytic core - and CF(0) - the membrane proton channel. CF(1) has five subunits: alpha(3), beta(3), gamma(1), delta(1), epsilon(1). CF(0) has three main subunits: a(1), b(2) and c(9-12). The alpha and beta chains form an alternating ring which encloses part of the gamma chain. CF(1) is attached to CF(0) by a central stalk formed by the gamma and epsilon chains, while a peripheral stalk is formed by the delta and b chains.

The protein resides in the cell inner membrane. The catalysed reaction is ATP + H2O + 4 H(+)(in) = ADP + phosphate + 5 H(+)(out). In terms of biological role, produces ATP from ADP in the presence of a proton gradient across the membrane. The alpha chain is a regulatory subunit. The polypeptide is ATP synthase subunit alpha (Shewanella oneidensis (strain ATCC 700550 / JCM 31522 / CIP 106686 / LMG 19005 / NCIMB 14063 / MR-1)).